The sequence spans 273 residues: NH(3)-dependent NAD(+) synthetase (273 aa).

Residue 47-54 participates in ATP binding; the sequence is GISGGQDS. Asp-53 serves as a coordination point for Mg(2+). Arg-139 provides a ligand contact to deamido-NAD(+). Thr-159 lines the ATP pocket. Residue Glu-164 participates in Mg(2+) binding. The deamido-NAD(+) site is built by Lys-172 and Asp-179. 2 residues coordinate ATP: Lys-188 and Thr-210. Position 259–260 (259–260) interacts with deamido-NAD(+); that stretch reads HK.

The protein belongs to the NAD synthetase family. In terms of assembly, homodimer.

The catalysed reaction is deamido-NAD(+) + NH4(+) + ATP = AMP + diphosphate + NAD(+) + H(+). It participates in cofactor biosynthesis; NAD(+) biosynthesis; NAD(+) from deamido-NAD(+) (ammonia route): step 1/1. Catalyzes the ATP-dependent amidation of deamido-NAD to form NAD. Uses ammonia as a nitrogen source. The chain is NH(3)-dependent NAD(+) synthetase from Staphylococcus aureus (strain N315).